A 100-amino-acid chain; its full sequence is Class II hydrophobin 4 (100 aa).

A signal peptide spans 1 to 17 (MQFYAIASLFLAGTAFA). 4 disulfides stabilise this stretch: C29–C79, C40–C70, C41–C53, and C80–C92.

It belongs to the cerato-ulmin hydrophobin family.

It localises to the secreted. Its subcellular location is the cell wall. Its function is as follows. Aerial growth, conidiation, and dispersal of filamentous fungi in the environment rely upon a capability of their secreting small amphipathic proteins called hydrophobins (HPBs) with low sequence identity. Class I can self-assemble into an outermost layer of rodlet bundles on aerial cell surfaces, conferring cellular hydrophobicity that supports fungal growth, development and dispersal; whereas Class II form highly ordered films at water-air interfaces through intermolecular interactions but contribute nothing to the rodlet structure. Does not seem to be important for the ability to cause seedling disease. This Gibberella moniliformis (Maize ear and stalk rot fungus) protein is Class II hydrophobin 4.